A 283-amino-acid polypeptide reads, in one-letter code: Peroxisomal protein 2 (283 aa).

The short motif at 281-283 is the Peroxisomal target signal 1 (PTS1) element; it reads VKL.

Belongs to the PXP2 family.

Its subcellular location is the peroxisome matrix. It is found in the cytoplasm. It localises to the cytosol. In terms of biological role, probably involved in peroxisome formation or maintenance as well as in amino acid metabolism. The polypeptide is Peroxisomal protein 2 (Saccharomyces cerevisiae (strain ATCC 204508 / S288c) (Baker's yeast)).